A 356-amino-acid chain; its full sequence is Protein-arginine kinase (356 aa).

A Phosphagen kinase C-terminal domain is found at 24–254; that stretch reads IVLSTRIRLA…HQLIQQEKAA (231 aa). Residues 27-31, histidine 92, arginine 125, 176-180, and 207-212 each bind ATP; these read STRIR, RASVM, and RGIYGE. Positions 337-342 match the RDXXRA motif of the pArg binding pocket involved in allosteric regulation motif; that stretch reads RDYRRA.

It belongs to the ATP:guanido phosphotransferase family.

The enzyme catalyses L-arginyl-[protein] + ATP = N(omega)-phospho-L-arginyl-[protein] + ADP + H(+). Appears to be allosterically activated by the binding of pArg-containing polypeptides to the pArg-binding pocket localized in the C-terminal domain of McsB. In terms of biological role, catalyzes the specific phosphorylation of arginine residues in a large number of proteins. Is part of the bacterial stress response system. Protein arginine phosphorylation has a physiologically important role and is involved in the regulation of many critical cellular processes, such as protein homeostasis, motility, competence, and stringent and stress responses, by regulating gene expression and protein activity. The polypeptide is Protein-arginine kinase (Bacillus cytotoxicus (strain DSM 22905 / CIP 110041 / 391-98 / NVH 391-98)).